The chain runs to 596 residues: Aspartate--tRNA(Asp/Asn) ligase (596 aa).

Glu-175 serves as a coordination point for L-aspartate. Positions 199 to 202 are aspartate; it reads QQYK. 2 residues coordinate L-aspartate: Arg-221 and His-454. Position 221 to 223 (221 to 223) interacts with ATP; that stretch reads RDE. Glu-488 is a binding site for ATP. Arg-495 is an L-aspartate binding site. ATP is bound at residue 540–543; the sequence is GVDR.

Belongs to the class-II aminoacyl-tRNA synthetase family. Type 1 subfamily. In terms of assembly, homodimer.

Its subcellular location is the cytoplasm. It catalyses the reaction tRNA(Asx) + L-aspartate + ATP = L-aspartyl-tRNA(Asx) + AMP + diphosphate. Its function is as follows. Aspartyl-tRNA synthetase with relaxed tRNA specificity since it is able to aspartylate not only its cognate tRNA(Asp) but also tRNA(Asn). Reaction proceeds in two steps: L-aspartate is first activated by ATP to form Asp-AMP and then transferred to the acceptor end of tRNA(Asp/Asn). This is Aspartate--tRNA(Asp/Asn) ligase from Bartonella bacilliformis (strain ATCC 35685 / KC583 / Herrer 020/F12,63).